We begin with the raw amino-acid sequence, 428 residues long: Cell number regulator 13 (428 aa).

A compositionally biased stretch (basic and acidic residues) spans 233–280 (PEKETNVKAPEKKGSNYSESKGETAKSFDDDDDYPKKQNGDYPKKQKD). The disordered stretch occupies residues 233–290 (PEKETNVKAPEKKGSNYSESKGETAKSFDDDDDYPKKQNGDYPKKQKDTCSTQRCSSQ). Residues 281–290 (TCSTQRCSSQ) are compositionally biased toward polar residues. A helical transmembrane segment spans residues 354–370 (IMAYSLILSCCCYTCCV).

Expressed in roots, coleoptiles, leaves, stalks, apical meristems, immature ears, embryos, endosperm, pericarp, silks and tassel spikelets. Not detected in pollen.

Its subcellular location is the membrane. The polypeptide is Cell number regulator 13 (CNR13) (Zea mays (Maize)).